A 1429-amino-acid polypeptide reads, in one-letter code: Dicer-like protein 2 (1429 aa).

Residues 21 to 200 enclose the Helicase ATP-binding domain; it reads MFEASLKGNI…TIEMNLNSVC (180 aa). 34–41 provides a ligand contact to ATP; the sequence is MGTGSGKT. The short motif at 141 to 144 is the DEAH box element; sequence DEAH. One can recognise a Helicase C-terminal domain in the interval 335–501; that stretch reads ALISFLMSTE…EDRRRTEELR (167 aa). A Dicer dsRNA-binding fold domain is found at 528–622; it reads AMQHLVHFCD…LPLTKSREFT (95 aa). RNase III domains follow at residues 874-1014 and 1056-1250; these read ATRL…IDGG and QENL…VDSG. Mg(2+) is bound by residues Glu-1095, Asp-1236, and Glu-1239.

The protein belongs to the helicase family. Dicer subfamily. Mg(2+) serves as cofactor. The cofactor is Mn(2+).

Functionally, dicer-like endonuclease involved in cleaving double-stranded RNA in the RNA interference (RNAi) pathway. Produces 21 to 25 bp dsRNAs (siRNAs) which target the selective destruction of homologous RNAs leading to sequence-specific suppression of gene expression, called post-transcriptional gene silencing (PTGS). Part of a broad host defense response against viral infection and transposons. The polypeptide is Dicer-like protein 2 (dcl2) (Emericella nidulans (strain FGSC A4 / ATCC 38163 / CBS 112.46 / NRRL 194 / M139) (Aspergillus nidulans)).